We begin with the raw amino-acid sequence, 1268 residues long: SR-related and CTD-associated factor 8 (1268 aa).

In terms of domain architecture, CID spans 1–139 (MEAVKTFNSE…PLLDMAAGIP (139 aa)). At Thr-6 the chain carries Phosphothreonine. Lys-18 participates in a covalent cross-link: Glycyl lysine isopeptide (Lys-Gly) (interchain with G-Cter in SUMO1). Residues 270–283 (GEDSEHSEESKKEM) are compositionally biased toward basic and acidic residues. 3 disordered regions span residues 270–290 (GEDSEHSEESKKEMPTPQLSH), 322–355 (QQQPQKVTPQDSQEGTFGSEHSASPSQGSSQQHF), and 385–469 (EIFE…PVRS). Ser-273 is subject to Phosphoserine. A compositionally biased stretch (polar residues) spans 327-354 (KVTPQDSQEGTFGSEHSASPSQGSSQQH). Positions 394–443 (VAVRSRSRTHSRSRSRSPRKRRSRSRSGSRKRKHRKRSRSHSREKKRKAS) are enriched in basic residues. A compositionally biased stretch (basic and acidic residues) spans 447–461 (SSERRAREREKERQK). An RRM domain is found at 477 to 551 (TTLWVGQVDK…KVIKIAWALN (75 aa)). At Ser-617 the chain carries Phosphoserine. Residues 776–807 (QIPSGENTRPVIPSDIPSSAAMLAQPPGASST) form a disordered region. Asymmetric dimethylarginine is present on residues Arg-915, Arg-925, and Arg-936. Disordered stretches follow at residues 984–1012 (PGRPSIDNVPNPDKRIPLGNDNIQQEGDR) and 1040–1065 (RLDPREGPGRPPLDARDHFGRPPVDM). Residue Arg-1071 is modified to Asymmetric dimethylarginine. A disordered region spans residues 1199–1268 (ATSQRKGDNV…VVESTETEGT (70 aa)). The span at 1249–1262 (GTVAGVESEAVVES) shows a compositional bias: low complexity.

In terms of assembly, interacts with POLR2A; via C-terminal heptapeptide repeat domain (CTD) phosphorylated at 'Ser-2' and 'Ser-5'. Identified in a complex with CDC5L and other spliceosomal proteins.

It localises to the nucleus. Its subcellular location is the nucleus matrix. Its function is as follows. Anti-terminator protein required to prevent early mRNA termination during transcription. Together with SCAF4, acts by suppressing the use of early, alternative poly(A) sites, thereby preventing the accumulation of non-functional truncated proteins. Mechanistically, associates with the phosphorylated C-terminal heptapeptide repeat domain (CTD) of the largest RNA polymerase II subunit (POLR2A), and subsequently binds nascent RNA upstream of early polyadenylation sites to prevent premature mRNA transcript cleavage and polyadenylation. Independently of SCAF4, also acts as a positive regulator of transcript elongation. The sequence is that of SR-related and CTD-associated factor 8 from Mus musculus (Mouse).